The chain runs to 227 residues: Ras-related protein Rab-3C (227 aa).

Residues Ser39, Gly42, Lys43, Thr44, Ser45, Thr56, Ser57, Ser61, and Thr62 each contribute to the GTP site. Thr44 lines the Mg(2+) pocket. Positions 53 to 66 match the Switch 1 motif; it reads DSFTSAFVSTVGID. Mg(2+) is bound by residues Thr62 and Asp85. Phosphothreonine; by LRRK2 is present on Thr86. The short motif at 86 to 104 is the Switch 2 element; the sequence is TAGQERYRTITTAYYRGAM. GTP contacts are provided by Gly88, Asn143, Lys144, Asp146, Ala174, and Lys175. Phosphoserine is present on residues Ser196 and Ser198. Positions 202–227 are disordered; it reads DPAITAAKQSTRLKETPPPPQPNCGC. At Thr206 the chain carries Phosphothreonine. Residues 217 to 227 are compositionally biased toward pro residues; it reads TPPPPQPNCGC. 2 S-geranylgeranyl cysteine lipidation sites follow: Cys225 and Cys227. The residue at position 227 (Cys227) is a Cysteine methyl ester.

It belongs to the small GTPase superfamily. Rab family. Interacts with RIMS1, RIMS2, RPH3A and RPH3AL. Interacts with GDI2, CHM and CHML; phosphorylation at Thr-86 disrupts these interactions. Interacts with MADD (via uDENN domain); the GTP-bound form is preferred for interaction. Requires Mg(2+) as cofactor. In terms of processing, phosphorylation of Thr-86 in the switch II region by LRRK2 prevents the association of RAB regulatory proteins, including CHM, CHML and RAB GDP dissociation inhibitor GDI2.

The protein resides in the cell membrane. It catalyses the reaction GTP + H2O = GDP + phosphate + H(+). Regulated by guanine nucleotide exchange factors (GEFs) which promote the exchange of bound GDP for free GTP. Regulated by GTPase activating proteins (GAPs) which increase the GTP hydrolysis activity. Inhibited by GDP dissociation inhibitors (GDIs) which prevent Rab-GDP dissociation. Its function is as follows. The small GTPases Rab are key regulators of intracellular membrane trafficking, from the formation of transport vesicles to their fusion with membranes. Rabs cycle between an inactive GDP-bound form and an active GTP-bound form that is able to recruit to membranes different sets of downstream effectors directly responsible for vesicle formation, movement, tethering and fusion. This chain is Ras-related protein Rab-3C, found in Mus musculus (Mouse).